Consider the following 125-residue polypeptide: NADPH-dependent 7-cyano-7-deazaguanine reductase (125 aa).

The Thioimide intermediate role is filled by Cys40. Catalysis depends on Asp47, which acts as the Proton donor. Residues 62-64 (LET) and 81-82 (HE) contribute to the substrate site.

It belongs to the GTP cyclohydrolase I family. QueF type 1 subfamily.

Its subcellular location is the cytoplasm. The enzyme catalyses 7-aminomethyl-7-carbaguanine + 2 NADP(+) = 7-cyano-7-deazaguanine + 2 NADPH + 3 H(+). The protein operates within tRNA modification; tRNA-queuosine biosynthesis. Its function is as follows. Catalyzes the NADPH-dependent reduction of 7-cyano-7-deazaguanine (preQ0) to 7-aminomethyl-7-deazaguanine (preQ1). This is NADPH-dependent 7-cyano-7-deazaguanine reductase from Frankia casuarinae (strain DSM 45818 / CECT 9043 / HFP020203 / CcI3).